Here is a 161-residue protein sequence, read N- to C-terminus: Cyclic pyranopterin monophosphate synthase (161 aa).

Substrate-binding positions include 75–77 (LCH) and 113–114 (ME). D128 is a catalytic residue.

It belongs to the MoaC family. In terms of assembly, homohexamer; trimer of dimers.

The enzyme catalyses (8S)-3',8-cyclo-7,8-dihydroguanosine 5'-triphosphate = cyclic pyranopterin phosphate + diphosphate. It functions in the pathway cofactor biosynthesis; molybdopterin biosynthesis. Catalyzes the conversion of (8S)-3',8-cyclo-7,8-dihydroguanosine 5'-triphosphate to cyclic pyranopterin monophosphate (cPMP). This is Cyclic pyranopterin monophosphate synthase from Shigella sonnei (strain Ss046).